A 341-amino-acid chain; its full sequence is Uroporphyrinogen decarboxylase (341 aa).

Residues arginine 23 to arginine 27, aspartate 73, tyrosine 147, serine 202, and histidine 318 contribute to the substrate site.

This sequence belongs to the uroporphyrinogen decarboxylase family. As to quaternary structure, homodimer.

The protein resides in the cytoplasm. The catalysed reaction is uroporphyrinogen III + 4 H(+) = coproporphyrinogen III + 4 CO2. The protein operates within porphyrin-containing compound metabolism; protoporphyrin-IX biosynthesis; coproporphyrinogen-III from 5-aminolevulinate: step 4/4. Catalyzes the decarboxylation of four acetate groups of uroporphyrinogen-III to yield coproporphyrinogen-III. This Erythrobacter litoralis (strain HTCC2594) protein is Uroporphyrinogen decarboxylase.